A 511-amino-acid chain; its full sequence is Probable cytochrome P450 4ac2 (511 aa).

The heme site is built by Glu318 and Cys455.

This sequence belongs to the cytochrome P450 family. Requires heme as cofactor.

The protein localises to the endoplasmic reticulum membrane. Its subcellular location is the microsome membrane. In terms of biological role, may be involved in the metabolism of insect hormones and in the breakdown of synthetic insecticides. This Drosophila melanogaster (Fruit fly) protein is Probable cytochrome P450 4ac2 (Cyp4ac2).